The sequence spans 479 residues: MSFQAPRRLLELAGQSLLRDQALAISVLDELPRELFPRLFVEAFTSRCCEVLKVMVQAWPFPCLPLGSLMKTPDLEILHYVVDGIDCLLAQKVRPRRWKLQVLEMRDVDENFWTIWSGARPLSCSPEAMSKRQTVEDCPRTGEKQPLKVFMDVCLKEKSVDEDLSFFSGWVQHRRRSVHLCCTKVVNYSMNILNFRNILETVYPDSIQVLEIWNMCWPCMVAEVSRYLSQMKNLRKLFISDGCGYLPSFESQGQLVAEFSSVFLRLEYLQMLYMRRIRFFEGYLDQLIRCLKSPLETLALTYGSLDEEDLKCLPWYPSLSQLKQLNLSHGTLRFIRLEPLRALLEKVAATLQTLFLVDCGIGDSKLRVILPALSRCSNLTTFCFHGNDTSMDGLKDLLRHTGRLSNLSLETYPAPRESLDNRGRVISELLTPLQAELMRILREVREPNRIFFGPVSCPCCGMSPTEQLEFNFCLRGRPA.

An LRR 1 repeat occupies 15–38; that stretch reads QSLLRDQALAISVLDELPRELFPR. The stretch at 97–124 is one LRR 1; degenerate repeat; that stretch reads RWKLQVLEMRDVDENFWTIWSGARPLSC. The stretch at 179–203 is one LRR 2; degenerate repeat; that stretch reads HLCCTKVVNYSMNILNFRNILETVY. An LRR 3; degenerate repeat occupies 204-230; that stretch reads PDSIQVLEIWNMCWPCMVAEVSRYLSQ. The stretch at 231–265 is one LRR 4; degenerate repeat; it reads MKNLRKLFISDGCGYLPSFESQGQLVAEFSSVFLR. 5 LRR repeats span residues 266–291, 292–323, 324–342, 348–375, and 376–400; these read LEYL…IRCL, KSPL…SQLK, QLNL…PLRA, AATL…ALSR, and CSNL…LLRH.

Belongs to the PRAME family.

This is PRAME family member 19 from Homo sapiens (Human).